Here is a 639-residue protein sequence, read N- to C-terminus: Methyl-accepting chemotaxis protein McpS (639 aa).

At 1–13 the chain is on the cytoplasmic side; that stretch reads MNSWFANISVNLK. A helical transmembrane segment spans residues 14–34; the sequence is LGLGFGLVLVLTGLLALTGWT. Topologically, residues 35-288 are periplasmic; that stretch reads SLGSLIDRSN…RDIESTQARS (254 aa). Residues 41–283 enclose the HBM domain; sequence DRSNWMGDIG…IQLERRDIES (243 aa). (S)-malate is bound at residue 60-65; that stretch reads RIARLQ. Succinate is bound at residue 60–65; the sequence is RIARLQ. Acetate is bound by residues Asp-138, Arg-183, Arg-187, and Tyr-236. Residues 191–245 are a coiled coil; it reads AENSSANEQAALRQLDAALADTDNLKRQLPSEDARLQQFENAVLAYRDAVRQFRD. The (S)-malate site is built by Arg-254 and Thr-258. Residue Arg-254 participates in succinate binding. The helical transmembrane segment at 289–309 threads the bilayer; that stretch reads LQAIATLLALLVGVLAAVLIT. The 53-residue stretch at 310 to 362 folds into the HAMP domain; the sequence is RQITRPLQDTLVAVEKIASGDLTQHMRVTRRDELGVLQQGIARMGTTLRELIS. Topologically, residues 310-639 are cytoplasmic; that stretch reads RQITRPLQDT…LQTLVSQFRV (330 aa). One can recognise a Methyl-accepting transducer domain in the interval 367–603; that stretch reads GVTQIASAAE…EISRSILNVR (237 aa).

This sequence belongs to the methyl-accepting chemotaxis (MCP) protein family. In terms of assembly, homodimer. Exists as a mixture of monomers and dimers in solution. Ligand binding stabilizes the dimeric form. Post-translationally, methylated by CheR2.

The protein localises to the cell membrane. With respect to regulation, binding of citrate to the ligand-binding domain reduces the chemotaxis towards the strong attractants such as malate and succinate. However, in physiologically relevant niches, citrate is mostly complexed with magnesium or calcium ions, and does not bind McpS. Functionally, chemotactic-signal transducers respond to changes in the concentration of attractants and repellents in the environment, transduce a signal from the outside to the inside of the cell, and facilitate sensory adaptation through the variation of the level of methylation. McpS is a specific chemoreceptor for 6 tricarboxylic acid (TCA) cycle intermediates (succinate, fumarate, malate, oxaloacetate, citrate and isocitrate), butyrate and acetate. Malate, succinate, fumarate and oxaloacetate cause the strongest chemotactic response. In Pseudomonas putida (strain ATCC 47054 / DSM 6125 / CFBP 8728 / NCIMB 11950 / KT2440), this protein is Methyl-accepting chemotaxis protein McpS (mcpS).